The following is a 605-amino-acid chain: Tyrosyl-DNA phosphodiesterase 1 (605 aa).

Positions 81-86 (RKKVKP) match the Nuclear localization signal motif. The active-site Nucleophile is the histidine 236. Lysine 238 is a binding site for substrate. The segment at 379–382 (SLGS) is interaction with DNA. The active-site Proton donor/acceptor is the histidine 466. Lysine 468 is a binding site for substrate.

The protein belongs to the tyrosyl-DNA phosphodiesterase family. As to expression, ubiquitous, with a low level in roots.

It localises to the nucleus. Inhibited by vanadate analogs. Its function is as follows. DNA repair enzyme that can remove a variety of covalent adducts from DNA through hydrolysis of a 3'-phosphodiester bond, giving rise to DNA with a free 3' phosphate. Catalyzes the hydrolysis of dead-end complexes between DNA and the topoisomerase I active site tyrosine residue. The chain is Tyrosyl-DNA phosphodiesterase 1 from Arabidopsis thaliana (Mouse-ear cress).